We begin with the raw amino-acid sequence, 324 residues long: Myb-like DNA-binding protein myb-1 (324 aa).

2 HTH myb-type domains span residues Met4–Leu59 and Asn60–Lys110. Residues Asn107 to Thr231 are disordered. Positions Arg155–Asp165 are enriched in polar residues. Residues Ser166–Ile175 show a composition bias toward basic and acidic residues. Composition is skewed to low complexity over residues Gln183–Gln192 and Pro222–Thr231.

It localises to the nucleus. The polypeptide is Myb-like DNA-binding protein myb-1 (rca-1) (Neurospora crassa (strain ATCC 24698 / 74-OR23-1A / CBS 708.71 / DSM 1257 / FGSC 987)).